Consider the following 172-residue polypeptide: Adenine phosphoribosyltransferase (172 aa).

It belongs to the purine/pyrimidine phosphoribosyltransferase family. In terms of assembly, homodimer.

The protein resides in the cytoplasm. It catalyses the reaction AMP + diphosphate = 5-phospho-alpha-D-ribose 1-diphosphate + adenine. It participates in purine metabolism; AMP biosynthesis via salvage pathway; AMP from adenine: step 1/1. Catalyzes a salvage reaction resulting in the formation of AMP, that is energically less costly than de novo synthesis. The polypeptide is Adenine phosphoribosyltransferase (Levilactobacillus brevis (strain ATCC 367 / BCRC 12310 / CIP 105137 / JCM 1170 / LMG 11437 / NCIMB 947 / NCTC 947) (Lactobacillus brevis)).